A 526-amino-acid polypeptide reads, in one-letter code: Clostripain (526 aa).

An N-terminal signal peptide occupies residues 1–27 (MLRRKVSTLLMTALITTSFLNSKPVYA). Positions 28 to 50 (NPVTKSKDNNLKEVQQVTSKSNK) are excised as a propeptide. Positions 182 to 190 (EKSNPRLNR) are cleaved as a propeptide — linker. The Nucleophile role is filled by C231.

Belongs to the peptidase C11 family. As to quaternary structure, heterodimer of a light chain and a heavy chain held together by strong non-covalent forces rather than by intramolecular disulfide bridges.

The enzyme catalyses Preferential cleavage: Arg-|-Xaa, including Arg-|-Pro bond, but not Lys-|-Xaa.. Cysteine endopeptidase with strict specificity. The chain is Clostripain (cloSI) from Hathewaya histolytica (Clostridium histolyticum).